We begin with the raw amino-acid sequence, 1168 residues long: Protein VARIATION IN COMPOUND TRIGGERED ROOT growth response (1168 aa).

One can recognise a TIR domain in the interval 10–171 (WVYDVFLSFS…EIANDVLAKL (162 aa)). Residue glutamate 85 is part of the active site. In terms of domain architecture, NB-ARC spans 187–452 (EDHIANMSVL…ACLFNHVKVR (266 aa)). 10 LRR repeats span residues 539-562 (TSKVSEFCVHENAFKGMGNLLFLD), 606-629 (LRNLVKLEMHDSKLEKLWEGAMSF), 631-653 (CLKELDMWASKYLKEIPDLSKAT), 676-699 (LNKLLELNMEYCGELETLPTGFNL), 701-720 (SLDYLNFNECWKLRTFPEFA), 721-744 (TNISNLILAETSIEEYPSNLYFKN), 795-820 (LNNLERLDICYCRNLESLPTGINLES), 839-865 (STNIKYLDLDQTGIEEVPWQIENFFNL), 873-896 (CRELKCVSLNIFKLKHLGEVSFSN), and 1065-1089 (NVPLSQLNYDHVDINIHITSGDWRS).

It belongs to the disease resistance NB-LRR family. As to quaternary structure, part of a nuclear protein complex made of VICTR, PAD4 and EDS1. Interacts (via TIR domain) with PAD4 and EDS1.

It localises to the cytoplasm. Its subcellular location is the nucleus. The enzyme catalyses NAD(+) + H2O = ADP-D-ribose + nicotinamide + H(+). Functionally, disease resistance protein of the TIR-NB-LRR-type. Part of the RPS6 locus that contains a cluster of several paralogous disease resistance (R) genes. Resistance proteins guard the plant against pathogens that contain an appropriate avirulence protein via an indirect interaction with this avirulence protein. That triggers a defense system including the hypersensitive response, which restricts the pathogen growth. Required for [5-(3,4-dichlorophenyl)furan-2-yl]-piperidine-1-ylmethanethione-(DFPM-) induced root growth arrest due to reduced number of meristem cells in the division zone of the primary root and inhibition of abscisic acid- (ABA-) induced stomatal closing. This Arabidopsis thaliana (Mouse-ear cress) protein is Protein VARIATION IN COMPOUND TRIGGERED ROOT growth response (VICTR).